An 82-amino-acid polypeptide reads, in one-letter code: Cytochrome b559 subunit alpha (82 aa).

A helical transmembrane segment spans residues 22–36 (VIHSITIPALFIAGW). Position 24 (H24) interacts with heme.

It belongs to the PsbE/PsbF family. In terms of assembly, heterodimer of an alpha subunit and a beta subunit. PSII is composed of 1 copy each of membrane proteins PsbA, PsbB, PsbC, PsbD, PsbE, PsbF, PsbH, PsbI, PsbJ, PsbK, PsbL, PsbM, PsbT, PsbX, PsbY, PsbZ, Psb30/Ycf12, peripheral proteins PsbO, CyanoQ (PsbQ), PsbU, PsbV and a large number of cofactors. It forms dimeric complexes. Heme b is required as a cofactor.

The protein resides in the cellular thylakoid membrane. In terms of biological role, this b-type cytochrome is tightly associated with the reaction center of photosystem II (PSII). PSII is a light-driven water:plastoquinone oxidoreductase that uses light energy to abstract electrons from H(2)O, generating O(2) and a proton gradient subsequently used for ATP formation. It consists of a core antenna complex that captures photons, and an electron transfer chain that converts photonic excitation into a charge separation. This is Cytochrome b559 subunit alpha from Trichodesmium erythraeum (strain IMS101).